The sequence spans 404 residues: uncharacterized protein (404 aa).

Transmembrane regions (helical) follow at residues 9–29 (IYLI…PYLS), 36–56 (GFGE…FIGL), 76–96 (LVVK…LLFC), 103–123 (IMFY…QLSI), 135–155 (FIQV…LEFY), 162–182 (KRIL…YLIY), 199–219 (AFFY…SFFI), 236–256 (LGLY…ILAI), 288–308 (IVPI…LFFL), 319–339 (IIVF…VNYL), and 366–386 (LIFT…LGIL).

The protein belongs to the polysaccharide synthase family. HI_0867/HI_1700 subfamily.

Its subcellular location is the cell membrane. This is an uncharacterized protein from Haemophilus influenzae (strain ATCC 51907 / DSM 11121 / KW20 / Rd).